Reading from the N-terminus, the 260-residue chain is Small ribosomal subunit protein uS3 (260 aa).

Residues 39–114 (LRQYIEQKLG…QIRINVVEVQ (76 aa)) form the KH type-2 domain. The tract at residues 219–260 (EVAAPPPSTRDRDRDRGDRDREPRRRQQQRRRQQFEDRSNEG) is disordered. 2 stretches are compositionally biased toward basic and acidic residues: residues 227–243 (TRDR…EPRR) and 251–260 (QQFEDRSNEG).

This sequence belongs to the universal ribosomal protein uS3 family. As to quaternary structure, part of the 30S ribosomal subunit. Forms a tight complex with proteins S10 and S14.

Functionally, binds the lower part of the 30S subunit head. Binds mRNA in the 70S ribosome, positioning it for translation. The sequence is that of Small ribosomal subunit protein uS3 from Trichormus variabilis (strain ATCC 29413 / PCC 7937) (Anabaena variabilis).